The primary structure comprises 297 residues: MSLKCETERSKTWNNFGNGIPCVLGIDEAGRGPVLGPMVYAAAISPLDQNVELKNLGVDDSKALNEAKREEIFNKMNEDEDIQQIIAYALRCLSPELISCSMLKRQKYSLNEVSHEAAITLIRDALACNVNVVEIKVDTVGPKATYQAKLEKLFPGISICVTEKADSLFPIVSAASIAAKVTRDSRLRNWQFREKNIKVPDAGYGSGYPGDPNTKKFLQLSVEPVFGFCSLVRSSWKTASTIVEKRCVPGSWEDDEEEGKSQSKRMTSWMVPKNETEVVPKRNVYFKERHMSNILTF.

Positions 21-248 (PCVLGIDEAG…ASTIVEKRCV (228 aa)) constitute an RNase H type-2 domain. Residues aspartate 27, glutamate 28, and aspartate 138 each contribute to the a divalent metal cation site.

This sequence belongs to the RNase HII family. Eukaryotic subfamily. Requires Mn(2+) as cofactor. The cofactor is Mg(2+).

It carries out the reaction Endonucleolytic cleavage to 5'-phosphomonoester.. In terms of biological role, catalytic subunit of RNase HII, an endonuclease that specifically degrades the RNA of RNA:DNA hybrids. Participates in DNA replication, possibly by mediating the removal of lagging-strand Okazaki fragment RNA primers during DNA replication. Mediates the excision of single ribonucleotides from DNA:RNA duplexes. The sequence is that of Ribonuclease H2 subunit A (rnh-2) from Caenorhabditis elegans.